The sequence spans 545 residues: Glutamine-dependent NAD(+) synthetase (545 aa).

Residues 5 to 247 enclose the CN hydrolase domain; it reads LRIAMAQFDF…DQWLVVDYMR (243 aa). Residue Glu46 is the Proton acceptor; for glutaminase activity of the active site. Lys113 (for glutaminase activity) is an active-site residue. An L-glutamine-binding site is contributed by Tyr119. The active-site Nucleophile; for glutaminase activity is Cys151. Positions 177 and 183 each coordinate L-glutamine. A ligase region spans residues 269–545; it reads VWRAVVRGVQ…RYPISNAYRG (277 aa). 292–299 is a binding site for ATP; that stretch reads GLSGGIDS. Asn375 contacts deamido-NAD(+). Thr399 serves as a coordination point for ATP. 2 residues coordinate deamido-NAD(+): Glu404 and Lys516.

The protein in the C-terminal section; belongs to the NAD synthetase family.

The catalysed reaction is deamido-NAD(+) + L-glutamine + ATP + H2O = L-glutamate + AMP + diphosphate + NAD(+) + H(+). It functions in the pathway cofactor biosynthesis; NAD(+) biosynthesis; NAD(+) from deamido-NAD(+) (L-Gln route): step 1/1. Catalyzes the ATP-dependent amidation of deamido-NAD to form NAD. Uses L-glutamine as a nitrogen source. In Xylella fastidiosa (strain 9a5c), this protein is Glutamine-dependent NAD(+) synthetase.